We begin with the raw amino-acid sequence, 426 residues long: Serine--tRNA ligase (426 aa).

235-237 is an L-serine binding site; it reads TAE. ATP contacts are provided by residues 266–268 and V282; that span reads RRE. An L-serine-binding site is contributed by E289. 353–356 is a binding site for ATP; the sequence is EASS. Residue S389 coordinates L-serine.

The protein belongs to the class-II aminoacyl-tRNA synthetase family. Type-1 seryl-tRNA synthetase subfamily. As to quaternary structure, homodimer. The tRNA molecule binds across the dimer.

The protein localises to the cytoplasm. It catalyses the reaction tRNA(Ser) + L-serine + ATP = L-seryl-tRNA(Ser) + AMP + diphosphate + H(+). It carries out the reaction tRNA(Sec) + L-serine + ATP = L-seryl-tRNA(Sec) + AMP + diphosphate + H(+). It functions in the pathway aminoacyl-tRNA biosynthesis; selenocysteinyl-tRNA(Sec) biosynthesis; L-seryl-tRNA(Sec) from L-serine and tRNA(Sec): step 1/1. Functionally, catalyzes the attachment of serine to tRNA(Ser). Is also able to aminoacylate tRNA(Sec) with serine, to form the misacylated tRNA L-seryl-tRNA(Sec), which will be further converted into selenocysteinyl-tRNA(Sec). The protein is Serine--tRNA ligase of Chlorobium chlorochromatii (strain CaD3).